The primary structure comprises 196 residues: Elongation factor Ts (196 aa).

Residues 80-83 (TDFV) form an involved in Mg(2+) ion dislocation from EF-Tu region.

It belongs to the EF-Ts family.

Its subcellular location is the cytoplasm. Its function is as follows. Associates with the EF-Tu.GDP complex and induces the exchange of GDP to GTP. It remains bound to the aminoacyl-tRNA.EF-Tu.GTP complex up to the GTP hydrolysis stage on the ribosome. The polypeptide is Elongation factor Ts (Desulfotalea psychrophila (strain LSv54 / DSM 12343)).